We begin with the raw amino-acid sequence, 236 residues long: Probable transcriptional regulatory protein Suden_1389 (236 aa).

This sequence belongs to the TACO1 family.

It localises to the cytoplasm. This is Probable transcriptional regulatory protein Suden_1389 from Sulfurimonas denitrificans (strain ATCC 33889 / DSM 1251) (Thiomicrospira denitrificans (strain ATCC 33889 / DSM 1251)).